A 143-amino-acid polypeptide reads, in one-letter code: Transcriptional regulator MraZ (143 aa).

2 SpoVT-AbrB domains span residues 5–47 (TYTP…PREE) and 76–119 (ADEQ…DAAA).

This sequence belongs to the MraZ family. As to quaternary structure, forms oligomers.

The protein resides in the cytoplasm. The protein localises to the nucleoid. The chain is Transcriptional regulator MraZ from Corynebacterium diphtheriae (strain ATCC 700971 / NCTC 13129 / Biotype gravis).